The sequence spans 89 residues: UPF0335 protein OCAR_5086/OCA5_c28780 (89 aa).

Belongs to the UPF0335 family.

The sequence is that of UPF0335 protein OCAR_5086/OCA5_c28780 from Afipia carboxidovorans (strain ATCC 49405 / DSM 1227 / KCTC 32145 / OM5) (Oligotropha carboxidovorans).